Consider the following 269-residue polypeptide: uncharacterized protein (269 aa).

In terms of domain architecture, ACT spans 14–89 (FEYEIQVNRP…KLREPRLRDR (76 aa)).

This is an uncharacterized protein from Bacillus subtilis (strain 168).